The sequence spans 1604 residues: Ubiquitin carboxyl-terminal hydrolase 32 (1604 aa).

3 EF-hand domains span residues 91–126, 228–263, and 264–299; these read KDEE…VDGK, IRPS…CCRG, and PLAE…LLEV. Asp241, Asn243, Asp245, His247, Glu252, Asp277, Asp279, Asp281, and Glu288 together coordinate Ca(2+). Residues 369 to 585 form the DUSP domain; the sequence is ATPEEEGQII…ANLALPRPVI (217 aa). The 834-residue stretch at 734-1567 folds into the USP domain; that stretch reads TGLSNLGNTC…SAYILFYEQQ (834 aa). Cys743 functions as the Nucleophile in the catalytic mechanism. Tyr1173 is modified (phosphotyrosine). Disordered stretches follow at residues 1343 to 1362 and 1367 to 1431; these read KKVD…SKSP and ANII…DASK. Ser1350, Ser1372, Ser1376, and Ser1454 each carry phosphoserine. Positions 1367–1399 are enriched in low complexity; the sequence is ANIISSPKGSPSSSRKSGTSCPSSKNSSPNSSP. The active-site Proton acceptor is His1526. At Ser1588 the chain carries Phosphoserine. Cys1601 is subject to Cysteine methyl ester. A lipid anchor (S-farnesyl cysteine) is attached at Cys1601. Residues 1602 to 1604 constitute a propeptide, removed in mature form; that stretch reads VLQ.

The protein belongs to the peptidase C19 family.

It localises to the golgi apparatus membrane. The enzyme catalyses Thiol-dependent hydrolysis of ester, thioester, amide, peptide and isopeptide bonds formed by the C-terminal Gly of ubiquitin (a 76-residue protein attached to proteins as an intracellular targeting signal).. Functionally, deubiquitinase that can remove conjugated ubiquitin from target proteins, such as RAB7A and LAMTOR1. Acts as a positive regulator of the mTORC1 signaling by mediating deubiquitination of LAMTOR1, thereby promoting the association between LAMTOR1 and the lysosomal V-ATPase complex and subsequent activation of the mTORC1 complex. The sequence is that of Ubiquitin carboxyl-terminal hydrolase 32 (USP32) from Homo sapiens (Human).